Here is a 971-residue protein sequence, read N- to C-terminus: Isoleucine--tRNA ligase (971 aa).

Residues 60–70 (PYANGDLHIGH) carry the 'HIGH' region motif. Glu-563 contributes to the L-isoleucyl-5'-AMP binding site. Positions 604–608 (KMSKS) match the 'KMSKS' region motif. Lys-607 provides a ligand contact to ATP. Residues Cys-922, Cys-925, Cys-942, and Cys-945 each contribute to the Zn(2+) site.

It belongs to the class-I aminoacyl-tRNA synthetase family. IleS type 1 subfamily. As to quaternary structure, monomer. It depends on Zn(2+) as a cofactor.

The protein localises to the cytoplasm. It carries out the reaction tRNA(Ile) + L-isoleucine + ATP = L-isoleucyl-tRNA(Ile) + AMP + diphosphate. Its function is as follows. Catalyzes the attachment of isoleucine to tRNA(Ile). As IleRS can inadvertently accommodate and process structurally similar amino acids such as valine, to avoid such errors it has two additional distinct tRNA(Ile)-dependent editing activities. One activity is designated as 'pretransfer' editing and involves the hydrolysis of activated Val-AMP. The other activity is designated 'posttransfer' editing and involves deacylation of mischarged Val-tRNA(Ile). The polypeptide is Isoleucine--tRNA ligase (Acaryochloris marina (strain MBIC 11017)).